We begin with the raw amino-acid sequence, 424 residues long: DNA primase DnaG (424 aa).

The region spanning 166–241 is the Toprim domain; the sequence is DTIIIVEGRA…KVDFIARAPE (76 aa). Residues Glu-172, Asp-215, and Asp-217 each coordinate Mg(2+).

It belongs to the archaeal DnaG primase family. Forms a ternary complex with MCM helicase and DNA. Component of the archaeal exosome complex. Requires Mg(2+) as cofactor.

It carries out the reaction ssDNA + n NTP = ssDNA/pppN(pN)n-1 hybrid + (n-1) diphosphate.. RNA polymerase that catalyzes the synthesis of short RNA molecules used as primers for DNA polymerase during DNA replication. Also part of the exosome, which is a complex involved in RNA degradation. Acts as a poly(A)-binding protein that enhances the interaction between heteromeric, adenine-rich transcripts and the exosome. The polypeptide is DNA primase DnaG (Staphylothermus marinus (strain ATCC 43588 / DSM 3639 / JCM 9404 / F1)).